The following is a 210-amino-acid chain: Outer-membrane lipoprotein carrier protein (210 aa).

The signal sequence occupies residues 1 to 26 (MHMIRRAAGALAVFAVAALAAAPAWA).

Belongs to the LolA family. As to quaternary structure, monomer.

It localises to the periplasm. Participates in the translocation of lipoproteins from the inner membrane to the outer membrane. Only forms a complex with a lipoprotein if the residue after the N-terminal Cys is not an aspartate (The Asp acts as a targeting signal to indicate that the lipoprotein should stay in the inner membrane). This chain is Outer-membrane lipoprotein carrier protein, found in Bordetella bronchiseptica (strain ATCC BAA-588 / NCTC 13252 / RB50) (Alcaligenes bronchisepticus).